Here is a 487-residue protein sequence, read N- to C-terminus: N-succinylglutamate 5-semialdehyde dehydrogenase (487 aa).

221–226 is an NAD(+) binding site; sequence GSSDTG. Catalysis depends on residues Glu-244 and Cys-278.

It belongs to the aldehyde dehydrogenase family. AstD subfamily.

It catalyses the reaction N-succinyl-L-glutamate 5-semialdehyde + NAD(+) + H2O = N-succinyl-L-glutamate + NADH + 2 H(+). It functions in the pathway amino-acid degradation; L-arginine degradation via AST pathway; L-glutamate and succinate from L-arginine: step 4/5. In terms of biological role, catalyzes the NAD-dependent reduction of succinylglutamate semialdehyde into succinylglutamate. This is N-succinylglutamate 5-semialdehyde dehydrogenase from Burkholderia pseudomallei (strain 1106a).